The chain runs to 225 residues: PKHD-type hydroxylase YbiX (225 aa).

Residues 78 to 177 (TLSTPLFNRY…RVASFMWIQS (100 aa)) enclose the Fe2OG dioxygenase domain. Residues His96, Asp98, and His158 each contribute to the Fe cation site. Arg168 lines the 2-oxoglutarate pocket.

Requires Fe(2+) as cofactor. It depends on L-ascorbate as a cofactor.

The chain is PKHD-type hydroxylase YbiX from Escherichia coli O45:K1 (strain S88 / ExPEC).